A 486-amino-acid chain; its full sequence is uncharacterized protein (486 aa).

LRR repeat units lie at residues 18–39 (NLKK…KKLV), 43–59 (ELHI…NIPE), 60–81 (NIKS…TKLK), 82–103 (NITY…ILPH), 104–125 (SIEF…NNLV), 126–147 (NLKK…FPIS), 148–168 (IVEL…EKLI), 169–190 (NLKK…IKFP), and 198–219 (DYQS…IEYE).

This is an uncharacterized protein from Amsacta moorei entomopoxvirus (AmEPV).